The sequence spans 196 residues: Peroxiredoxin TSA1-B (196 aa).

Residues 3-161 (PVVQQPAPSF…SLRLLEAFQF (159 aa)) enclose the Thioredoxin domain. 45 to 47 (TFV) is a binding site for substrate. Catalysis depends on Cys-48, which acts as the Cysteine sulfenic acid (-SOH) intermediate. Arg-124 lines the substrate pocket. The tract at residues 173–196 (WHPGDETIKPSPEASKEYFNKVNK) is disordered. The segment covering 175–196 (PGDETIKPSPEASKEYFNKVNK) has biased composition (basic and acidic residues).

The protein belongs to the peroxiredoxin family. AhpC/Prx1 subfamily. Homodimer; disulfide-linked, upon oxidation.

The protein resides in the cell surface. It localises to the nucleus. The protein localises to the cytoplasm. It carries out the reaction a hydroperoxide + [thioredoxin]-dithiol = an alcohol + [thioredoxin]-disulfide + H2O. Thiol-specific peroxidase that catalyzes the reduction of hydrogen peroxide and organic hydroperoxides to water and alcohols, respectively. Plays a role in cell protection against oxidative stress by detoxifying peroxides and as sensor of hydrogen peroxide-mediated signaling events. Also involved in the correct composition of the hyphal cell wall. In Candida albicans (strain SC5314 / ATCC MYA-2876) (Yeast), this protein is Peroxiredoxin TSA1-B.